The sequence spans 217 residues: GTPase IMAP family member GIMD1 (217 aa).

The region spanning 6–217 (KMIINLAVFG…ENHFQVLSLA (212 aa)) is the AIG1-type G domain. GTP contacts are provided by residues 15-23 (GRTQSGKSS), serine 36, and 148-150 (HAE).

The protein belongs to the TRAFAC class TrmE-Era-EngA-EngB-Septin-like GTPase superfamily. AIG1/Toc34/Toc159-like paraseptin GTPase family. IAN subfamily.

This is GTPase IMAP family member GIMD1 (Gimd1) from Mus musculus (Mouse).